Consider the following 355-residue polypeptide: Vi polysaccharide export protein VexA/TviF (355 aa).

A signal peptide spans 1–16; sequence MKKIIILLTTFFLLSG. Residue Cys-17 is the site of N-palmitoyl cysteine attachment. Cys-17 carries the S-diacylglycerol cysteine lipid modification.

This sequence belongs to the BexD/CtrA/VexA family.

Its subcellular location is the cell outer membrane. Its function is as follows. May form an ATP-driven capsule polysaccharide export apparatus, in association with the VexB, VexC and VexD proteins. May function as a membrane anchor for the polysaccharide. Possible porin properties. The chain is Vi polysaccharide export protein VexA/TviF (vexA) from Salmonella typhi.